The following is a 314-amino-acid chain: MKRQNQSCVVEFILLGFSNFPELQVQLFGVFLVIYVVTLMGNAIITVIISLNQSLHVPMYLFLLNLSVVEVSFSAVITPEMLVVLSTEKTMISFVGCFAQMYFILLFGGTECFLLGAMAYDRFAAICHPLNYPVIMNRGVFMKLVIFSWISGIMVATVQTTWVFSFPFCGPNEINHLFCETPPVLELVCADTFLFEIYAFTGTILIVMVPFLLILLSYIRVLFAILKMPSTTGRQKAFSTCASHLTSVTLFYGTANMTYLQPKSGYSPETKKLISLAYTLLTPLLNPLIYSLRNSEMKRTLIKLWRRKVILHTF.

Topologically, residues 1–25 are extracellular; it reads MKRQNQSCVVEFILLGFSNFPELQV. The N-linked (GlcNAc...) asparagine glycan is linked to Asn-5. A helical membrane pass occupies residues 26-46; it reads QLFGVFLVIYVVTLMGNAIIT. Over 47–54 the chain is Cytoplasmic; it reads VIISLNQS. Residues 55–75 traverse the membrane as a helical segment; it reads LHVPMYLFLLNLSVVEVSFSA. The Extracellular segment spans residues 76-99; it reads VITPEMLVVLSTEKTMISFVGCFA. A disulfide bond links Cys-97 and Cys-189. The chain crosses the membrane as a helical span at residues 100-120; that stretch reads QMYFILLFGGTECFLLGAMAY. Residues 121–139 are Cytoplasmic-facing; sequence DRFAAICHPLNYPVIMNRG. Residues 140 to 160 traverse the membrane as a helical segment; that stretch reads VFMKLVIFSWISGIMVATVQT. The Extracellular segment spans residues 161-197; sequence TWVFSFPFCGPNEINHLFCETPPVLELVCADTFLFEI. The helical transmembrane segment at 198-217 threads the bilayer; sequence YAFTGTILIVMVPFLLILLS. Topologically, residues 218–237 are cytoplasmic; the sequence is YIRVLFAILKMPSTTGRQKA. A helical transmembrane segment spans residues 238–258; the sequence is FSTCASHLTSVTLFYGTANMT. Over 259 to 271 the chain is Extracellular; that stretch reads YLQPKSGYSPETK. The helical transmembrane segment at 272–292 threads the bilayer; it reads KLISLAYTLLTPLLNPLIYSL. Topologically, residues 293 to 314 are cytoplasmic; that stretch reads RNSEMKRTLIKLWRRKVILHTF.

This sequence belongs to the G-protein coupled receptor 1 family.

Its subcellular location is the cell membrane. Functionally, odorant receptor. This is Olfactory receptor 10A3 (OR10A3) from Homo sapiens (Human).